The primary structure comprises 557 residues: Membrane protein insertase YidC (557 aa).

Residues 7–27 (ILLVALAVVSYLLVLQWNQDY) form a helical membrane-spanning segment. Positions 42 to 77 (ASPALPETVPGDSSTSADVPTAGSGNQVPDSAASTA) are disordered. Positions 52 to 77 (GDSSTSADVPTAGSGNQVPDSAASTA) are enriched in polar residues. 3 helical membrane-spanning segments follow: residues 370-390 (WGWSIIVLTVIIKLAFFPLSA), 436-456 (LGGCLPILVQMPVFLALYWVL), and 514-534 (PIIFTFFFLWFPAGLVLYWVV).

The protein belongs to the OXA1/ALB3/YidC family. Type 1 subfamily. Interacts with the Sec translocase complex via SecD. Specifically interacts with transmembrane segments of nascent integral membrane proteins during membrane integration.

It is found in the cell inner membrane. Its function is as follows. Required for the insertion and/or proper folding and/or complex formation of integral membrane proteins into the membrane. Involved in integration of membrane proteins that insert both dependently and independently of the Sec translocase complex, as well as at least some lipoproteins. Aids folding of multispanning membrane proteins. The polypeptide is Membrane protein insertase YidC (Azotobacter vinelandii (strain DJ / ATCC BAA-1303)).